A 173-amino-acid chain; its full sequence is Mitochondrial holo-[acyl-carrier-protein] synthase (173 aa).

Belongs to the P-Pant transferase superfamily. AcpS family.

It is found in the mitochondrion. The catalysed reaction is apo-[ACP] + CoA = holo-[ACP] + adenosine 3',5'-bisphosphate + H(+). Its function is as follows. Transfers the 4'-phosphopantetheine moiety from coenzyme A to a Ser of mitochondrial acyl-carrier-protein. The chain is Mitochondrial holo-[acyl-carrier-protein] synthase (PPT2) from Saccharomyces cerevisiae (strain ATCC 204508 / S288c) (Baker's yeast).